The following is a 303-amino-acid chain: Agmatinase (303 aa).

Mn(2+)-binding residues include histidine 126, aspartate 149, histidine 151, aspartate 153, aspartate 230, and aspartate 232.

This sequence belongs to the arginase family. Agmatinase subfamily. It depends on Mn(2+) as a cofactor.

It catalyses the reaction agmatine + H2O = urea + putrescine. Its function is as follows. Catalyzes the formation of putrescine from agmatine. This is Agmatinase (speB) from Blochmanniella floridana.